The sequence spans 598 residues: Vanadium-dependent bromoperoxidase (598 aa).

Ca(2+) contacts are provided by Phe-361, Gln-363, Asp-365, Asp-368, and Gln-370. 2 residues coordinate vanadate: Lys-400 and Arg-408. His-480 is an active-site residue. The vanadate site is built by Ser-485, Gly-486, His-487, Arg-547, and His-553. The active site involves His-487.

This sequence belongs to the vanadium-dependent haloperoxidase family. As to quaternary structure, homododecamer. It depends on Ca(2+) as a cofactor. Requires vanadate as cofactor.

It catalyses the reaction RH + Br(-) + H2O2 = RBr + 2 H2O.. Functionally, catalyzes the halogenation of organic substrates in the presence of hydrogen peroxide. In Corallina pilulifera (Red coralline alga), this protein is Vanadium-dependent bromoperoxidase.